Here is a 296-residue protein sequence, read N- to C-terminus: Peptide transport system permease protein SapC (296 aa).

Residues 1-28 are Cytoplasmic-facing; sequence MPYDSVYSEKRPPGTLRTAWRKFYSDAS. Residues 29–49 traverse the membrane as a helical segment; sequence AMVGLYGCAGLAVLCIFGGWF. Over 50-98 the chain is Periplasmic; it reads APYGIDQQFLGYQLLPPSWSRYGEVSFFLGTDDLGRDVLSRLLSGAAPT. The chain crosses the membrane as a helical span at residues 99–119; it reads VGGAFVVTLAATICGLVLGTF. One can recognise an ABC transmembrane type-1 domain in the interval 99 to 284; it reads VGGAFVVTLA…ISVLLVNLLG (186 aa). Topologically, residues 120–133 are cytoplasmic; sequence AGATHGLRSAVLNH. The chain crosses the membrane as a helical span at residues 134–154; it reads ILDTLLAIPSLLLAIIVVAFA. The Periplasmic portion of the chain corresponds to 155 to 196; that stretch reads GPSLSHAMFAVWLALLPRMVRSIYSMVHDELEKEYVIAARLD. Residues 197 to 217 traverse the membrane as a helical segment; the sequence is GASTLNILWFAVMPNITAGLV. The Cytoplasmic portion of the chain corresponds to 218–222; that stretch reads TEITR. The chain crosses the membrane as a helical span at residues 223–243; it reads ALSMAILDIAALGFLDLGAQL. Topologically, residues 244–257 are periplasmic; that stretch reads PSPEWGAMLGDALE. A helical membrane pass occupies residues 258–278; sequence LIYVAPWTVMLPGAAIMISVL. At 279 to 296 the chain is on the cytoplasmic side; it reads LVNLLGDGVRRAIIAGVE.

This sequence belongs to the binding-protein-dependent transport system permease family. OppBC subfamily.

The protein localises to the cell inner membrane. In terms of biological role, involved in a peptide intake transport system that plays a role in the resistance to antimicrobial peptides. The polypeptide is Peptide transport system permease protein SapC (sapC) (Escherichia coli O6:H1 (strain CFT073 / ATCC 700928 / UPEC)).